The chain runs to 771 residues: Chaperone protein dnaK3 (771 aa).

At T198 the chain carries Phosphothreonine; by autocatalysis. Residues 624 to 771 form a disordered region; that stretch reads FDDDDDYYNR…GWDDDDDDWF (148 aa). Basic and acidic residues-rich tracts occupy residues 630–652 and 708–734; these read YYNRRPAPRDDYRGGNDYGRYDD and YDDRRSSPQDDYSRGDRQKDYDYRENA.

The protein belongs to the heat shock protein 70 family.

Acts as a chaperone. The sequence is that of Chaperone protein dnaK3 (dnaK3) from Synechocystis sp. (strain ATCC 27184 / PCC 6803 / Kazusa).